The chain runs to 394 residues: NAD(P)H-quinone oxidoreductase subunit H (394 aa).

It belongs to the complex I 49 kDa subunit family. As to quaternary structure, NDH-1 can be composed of about 15 different subunits; different subcomplexes with different compositions have been identified which probably have different functions.

The protein localises to the cellular thylakoid membrane. The enzyme catalyses a plastoquinone + NADH + (n+1) H(+)(in) = a plastoquinol + NAD(+) + n H(+)(out). It catalyses the reaction a plastoquinone + NADPH + (n+1) H(+)(in) = a plastoquinol + NADP(+) + n H(+)(out). NDH-1 shuttles electrons from an unknown electron donor, via FMN and iron-sulfur (Fe-S) centers, to quinones in the respiratory and/or the photosynthetic chain. The immediate electron acceptor for the enzyme in this species is believed to be plastoquinone. Couples the redox reaction to proton translocation, and thus conserves the redox energy in a proton gradient. Cyanobacterial NDH-1 also plays a role in inorganic carbon-concentration. The polypeptide is NAD(P)H-quinone oxidoreductase subunit H (Synechococcus sp. (strain CC9902)).